A 935-amino-acid polypeptide reads, in one-letter code: MEGNTNWKPNEQGGNRDAANNRIDWRSQHEPELRQKVLSKIVEKFKEKFHAHEEYKINDIASKFEENFYSIATDKTTTSQQWLQQNTQSNLCVICFAKSGPYNRSRFSKTDTCSVTAAATSSAKFVETTYSTAFSSIKLTKHSITDQKSVFDTTEQKRQEQEQLINQLTNLPTSRPNNRDQQGAFQVSSSQQNNNVTLHAMSQQKNNLQSMTRGQQVGQSQPMMSQQYRQQYPMQQDPQNRNLQKHLDFVQNNTNQFQAASSLRQTQNITDQQNQPQQLERANPSILIMNIIVASQDSTGKTVNVNAGNWQEETYQKIKKLKEMCLPVLSLMHQRVAEKLRETESLPPQPMQAQWIEKLKAGKLSMEHLMFFLNVHRSSVSEKHRDKFSQYEYHILKFTKSQTMVLRPTQQQQGQFPPSQTAMQTQSPQVHVSQSLYKEQRRSRLMPSSQNEASSLLQIRPKLDPRDENIIMASSGNVMLPSVKQNPRAVNTNISSVQSLQKQKRFHHRQMQQQQPQQGNHQHQMQTNEMNDVRMRERVNIKARLLEQQVSSSQRQVPKQESNVSSSQIQNHSSPQLVDQHILPATINKTGTPLNSSGSAFVAPAPSPVPGDSEMPISVESPVSGVDEINSTLDSSSKLGTQETPLLFVPPPEPITERPIDRLIKAFQAASPKSLAESVSEISSVISMVDMIGGSFPSSGGSRAGLGEDLSERTRNFTTHEETNLSKRMKRSINIVPPDMSSQIDSYEQLSSLESEVVSTTSSGLKVNNIAPGYALLQEIKETNGRLVETVVEICDEDSLGTIVTCTYAPVALSATFKDHYKSGKIIFYVSKCLMQAQIQPLRLLFPMDYPYSSPIVLEEISFDTSVHKYEDLSARTRSRFSLSMKEFSEPGFSKGIAQTWNDCARATMVEYAERHGGGTFSSKYGAWETVLRAS.

Over residues 1-13 (MEGNTNWKPNEQG) the composition is skewed to polar residues. 5 disordered regions span residues 1–28 (MEGN…WRSQ), 170–190 (NLPT…VSSS), 495–526 (SSVQ…HQMQ), 548–611 (QQVS…PVPG), and 635–654 (SSSK…PPEP). Residues 511–526 (MQQQQPQQGNHQHQMQ) are compositionally biased toward low complexity. Polar residues-rich tracts occupy residues 548-577 (QQVS…SPQL) and 635-644 (SSSKLGTQET).

This sequence belongs to the plant Mediator complex subunit 15 family. In terms of assembly, component of the Mediator complex.

The protein localises to the nucleus. Its function is as follows. Component of the Mediator complex, a coactivator involved in the regulated transcription of nearly all RNA polymerase II-dependent genes. Mediator functions as a bridge to convey information from gene-specific regulatory proteins to the basal RNA polymerase II transcription machinery. The Mediator complex, having a compact conformation in its free form, is recruited to promoters by direct interactions with regulatory proteins and serves for the assembly of a functional preinitiation complex with RNA polymerase II and the general transcription factors. This Arabidopsis thaliana (Mouse-ear cress) protein is Probable mediator of RNA polymerase II transcription subunit 15c (MED15C).